The following is a 20-amino-acid chain: Collagenolytic protease 28 kDa (20 aa).

Residues 1 to 20 form the Peptidase S1 domain; the sequence is IVGGQEASPGSWPXQVGLFF.

It belongs to the peptidase S1 family.

The catalysed reaction is Hydrolysis of proteins, with broad specificity for peptide bonds. Native collagen is cleaved about 75% of the length of the molecule from the N-terminus. Low activity on small molecule substrates of both trypsin and chymotrypsin.. This enzyme is a serine protease capable of degrading the native triple helix of collagen. In Paralithodes camtschaticus (Red king crab), this protein is Collagenolytic protease 28 kDa.